A 245-amino-acid chain; its full sequence is Complement C1q subcomponent subunit C (245 aa).

Residues 1–28 form the signal peptide; it reads MVVGTSCQPQHGLYLLLLLLALPLRSQA. Residues 31-112 enclose the Collagen-like domain; that stretch reads GCYGIPGMPG…GPPGEPGEEG (82 aa). Pro36, Pro39, Pro42, Pro45, and Pro63 each carry 4-hydroxyproline. The tract at residues 42–119 is disordered; that stretch reads PGTPGKDGHD…EEGRYKQKHQ (78 aa). Lys75 is modified (5-hydroxylysine). O-linked (Gal...) hydroxylysine glycosylation occurs at Lys75. A 4-hydroxyproline mark is found at Pro81, Pro96, Pro99, and Pro105. The span at 98–107 shows a compositional bias: pro residues; it reads DPGPRGPPGE. The C1q domain occupies 115–245; that stretch reads KQKHQSVFTV…VFSGFLLFPD (131 aa). A disulfide bond links Cys179 and Cys193.

Core component of the complement C1 complex, a calcium-dependent complex composed of 1 molecule of the C1Q subcomplex, 2 molecules of C1R and 2 molecules of C1S. The C1Q subcomplex is composed 18 subunits: 3 chains of C1QA, C1QB, and C1QC trimerize to form 6 collagen-like triple helices connected to six globular ligand-recognition modules (C1q domain). Post-translationally, O-linked glycans consist of Glc-Gal disaccharides bound to the oxygen atom of post-translationally added hydroxyl groups.

Its subcellular location is the secreted. The protein localises to the cell surface. Its activity is regulated as follows. The C1Q subcomplex is inhibited by sulfated molecules, such as triterpenoid sulfates, heparan sulfate, or chondroitin sulfates. Its function is as follows. Core component of the complement C1 complex, a multiprotein complex that initiates the classical pathway of the complement system, a cascade of proteins that leads to phagocytosis and breakdown of pathogens and signaling that strengthens the adaptive immune system. The classical complement pathway is initiated by the C1Q subcomplex of the C1 complex, which specifically binds IgG or IgM immunoglobulins complexed with antigens, forming antigen-antibody complexes on the surface of pathogens: C1QA, together with C1QB and C1QC, specifically recognizes and binds the Fc regions of IgG or IgM via its C1q domain. Immunoglobulin-binding activates the proenzyme C1R, which cleaves C1S, initiating the proteolytic cascade of the complement system. The C1Q subcomplex is activated by a hexamer of IgG complexed with antigens, while it is activated by a pentameric IgM. The C1Q subcomplex also recognizes and binds phosphatidylserine exposed on the surface of cells undergoing programmed cell death, possibly promoting activation of the complement system. This Rattus norvegicus (Rat) protein is Complement C1q subcomponent subunit C.